Here is a 399-residue protein sequence, read N- to C-terminus: Elongation factor Tu 2 (399 aa).

Residues 10-209 (KPHVNIGTIG…QVDGYIPEPE (200 aa)) enclose the tr-type G domain. Residues 19–26 (GHVDHGKT) form a G1 region. Position 19–26 (19–26 (GHVDHGKT)) interacts with GTP. T26 is a binding site for Mg(2+). The tract at residues 60–64 (GITIA) is G2. The G3 stretch occupies residues 81–84 (DCPG). Residues 81–85 (DCPGH) and 136–139 (NKAD) contribute to the GTP site. The segment at 136–139 (NKAD) is G4. The segment at 174–176 (SAL) is G5.

This sequence belongs to the TRAFAC class translation factor GTPase superfamily. Classic translation factor GTPase family. EF-Tu/EF-1A subfamily. As to quaternary structure, monomer.

It is found in the cytoplasm. The catalysed reaction is GTP + H2O = GDP + phosphate + H(+). In terms of biological role, GTP hydrolase that promotes the GTP-dependent binding of aminoacyl-tRNA to the A-site of ribosomes during protein biosynthesis. The polypeptide is Elongation factor Tu 2 (Syntrophotalea carbinolica (strain DSM 2380 / NBRC 103641 / GraBd1) (Pelobacter carbinolicus)).